Here is a 277-residue protein sequence, read N- to C-terminus: ATP synthase subunit a (277 aa).

Helical transmembrane passes span 40 to 60 (AWHV…LIIF), 98 to 118 (SALI…MNLM), 154 to 174 (DLNL…FYSI), 219 to 239 (LFGN…IGYF), and 245 to 265 (FMWA…FMML).

Belongs to the ATPase A chain family. F-type ATPases have 2 components, CF(1) - the catalytic core - and CF(0) - the membrane proton channel. CF(1) has five subunits: alpha(3), beta(3), gamma(1), delta(1), epsilon(1). CF(0) has three main subunits: a(1), b(2) and c(9-12). The alpha and beta chains form an alternating ring which encloses part of the gamma chain. CF(1) is attached to CF(0) by a central stalk formed by the gamma and epsilon chains, while a peripheral stalk is formed by the delta and b chains.

Its subcellular location is the cell inner membrane. Key component of the proton channel; it plays a direct role in the translocation of protons across the membrane. The polypeptide is ATP synthase subunit a (Alteromonas mediterranea (strain DSM 17117 / CIP 110805 / LMG 28347 / Deep ecotype)).